The sequence spans 68 residues: DNA-directed RNA polymerase subunit omega (68 aa).

It belongs to the RNA polymerase subunit omega family. In terms of assembly, the RNAP catalytic core consists of 2 alpha, 1 beta, 1 beta' and 1 omega subunit. When a sigma factor is associated with the core the holoenzyme is formed, which can initiate transcription.

It catalyses the reaction RNA(n) + a ribonucleoside 5'-triphosphate = RNA(n+1) + diphosphate. Functionally, promotes RNA polymerase assembly. Latches the N- and C-terminal regions of the beta' subunit thereby facilitating its interaction with the beta and alpha subunits. The protein is DNA-directed RNA polymerase subunit omega of Ruminiclostridium cellulolyticum (strain ATCC 35319 / DSM 5812 / JCM 6584 / H10) (Clostridium cellulolyticum).